Consider the following 340-residue polypeptide: Glutamyl-tRNA reductase (340 aa).

Substrate is bound by residues 49–52 (TCNR), Ser-108, 113–115 (ETE), and Gln-119. Cys-50 (nucleophile) is an active-site residue. An NADP(+)-binding site is contributed by 188 to 193 (GAGEMS).

Belongs to the glutamyl-tRNA reductase family. As to quaternary structure, homodimer.

It catalyses the reaction (S)-4-amino-5-oxopentanoate + tRNA(Glu) + NADP(+) = L-glutamyl-tRNA(Glu) + NADPH + H(+). It functions in the pathway porphyrin-containing compound metabolism; protoporphyrin-IX biosynthesis; 5-aminolevulinate from L-glutamyl-tRNA(Glu): step 1/2. In terms of biological role, catalyzes the NADPH-dependent reduction of glutamyl-tRNA(Glu) to glutamate 1-semialdehyde (GSA). This chain is Glutamyl-tRNA reductase, found in Akkermansia muciniphila (strain ATCC BAA-835 / DSM 22959 / JCM 33894 / BCRC 81048 / CCUG 64013 / CIP 107961 / Muc).